The chain runs to 369 residues: Putative 2-aminoethylphosphonate import ATP-binding protein PhnT (369 aa).

Positions isoleucine 19–leucine 250 constitute an ABC transporter domain. Glycine 51 to threonine 58 contacts ATP.

It belongs to the ABC transporter superfamily. 2-aminoethylphosphonate importer (TC 3.A.1.11.5) family.

Its subcellular location is the cell inner membrane. Probably part of the PhnSTUV complex (TC 3.A.1.11.5) involved in 2-aminoethylphosphonate import. Probably responsible for energy coupling to the transport system. The chain is Putative 2-aminoethylphosphonate import ATP-binding protein PhnT (phnT) from Salmonella typhi.